Reading from the N-terminus, the 790-residue chain is B3 domain-containing transcription repressor VAL1 (790 aa).

The interval 234–260 is disordered; the sequence is KPSRPAISTPPVASKSAQARIGRPPVE. Positions 295–396 form a DNA-binding region, TF-B3; it reads FEKTLSASDA…KLIMGSRKAA (102 aa). 2 disordered regions span residues 400–429 and 446–468; these read DMQG…SING and NLNS…EKKR. Positions 405 to 429 are enriched in polar residues; it reads GLTNGTSTEDTSSSGVTENPPSING. Residues 538–588 form a CW-type zinc finger; the sequence is SGEQERWATCDDCSKWRRLPVDALLSFKWTCIDNVWDVSRCSCSAPEESLK. Residues Cys-547, Cys-550, Cys-568, and Cys-580 each contribute to the Zn(2+) site. Residues 685-732 adopt a coiled-coil conformation; that stretch reads LMMRRKKKQLERDVTAAEDKKKKDMELAESDKSKEEKEVNTARIDLNS. A disordered region spans residues 689-737; sequence RKKKQLERDVTAAEDKKKKDMELAESDKSKEEKEVNTARIDLNSDPYNK. Residues 694 to 724 show a composition bias toward basic and acidic residues; that stretch reads LERDVTAAEDKKKKDMELAESDKSKEEKEVN.

In terms of assembly, interacts with SNL1. In terms of tissue distribution, expressed in flowers and at lower levels in roots, stems and leaves.

It is found in the nucleus. Transcriptional repressor of gene expression involved in embryonic pathways, such as LEC1, ABI3, and FUS3. Repressor of the sugar-inducible genes involved in the seed maturation program in seedlings. Plays an essential role in regulating the transition from seed maturation to seedling growth. Functionally redundant with VAL2/HSL1. The polypeptide is B3 domain-containing transcription repressor VAL1 (VAL1) (Arabidopsis thaliana (Mouse-ear cress)).